The chain runs to 176 residues: NAD(P)H-quinone oxidoreductase subunit 6, chloroplastic (176 aa).

Helical transmembrane passes span 10–30 (FLLVFLGSGLIVGGLGVVLLT), 32–52 (PIFSAFSLGLVLVCISLFFSL), 61–81 (AQLLIYVGAINVLILFAVMFM), 92–112 (LWTVGDGITSLVCTSIFISLI), and 152–172 (FFLPFELISIILLVSLIGAIA).

It belongs to the complex I subunit 6 family. As to quaternary structure, NDH is composed of at least 16 different subunits, 5 of which are encoded in the nucleus.

Its subcellular location is the plastid. The protein resides in the chloroplast thylakoid membrane. The catalysed reaction is a plastoquinone + NADH + (n+1) H(+)(in) = a plastoquinol + NAD(+) + n H(+)(out). The enzyme catalyses a plastoquinone + NADPH + (n+1) H(+)(in) = a plastoquinol + NADP(+) + n H(+)(out). NDH shuttles electrons from NAD(P)H:plastoquinone, via FMN and iron-sulfur (Fe-S) centers, to quinones in the photosynthetic chain and possibly in a chloroplast respiratory chain. The immediate electron acceptor for the enzyme in this species is believed to be plastoquinone. Couples the redox reaction to proton translocation, and thus conserves the redox energy in a proton gradient. The chain is NAD(P)H-quinone oxidoreductase subunit 6, chloroplastic (ndhG) from Oenothera argillicola (Appalachian evening primrose).